Reading from the N-terminus, the 414-residue chain is Tetraspanning orphan receptor (414 aa).

Residues 1-28 (MPRASALLTSDPRHQFTCCLCLHVRTGT) are Cytoplasmic-facing. The helical transmembrane segment at 29–49 (IIFGITQIIIQLIFISFLFLM) threads the bilayer. At 50–166 (TFNPRLFPED…EIKIRQFSPY (117 aa)) the chain is on the extracellular side. The chain crosses the membrane as a helical span at residues 167–187 (IAVCVTTFSLAFCCFMVHGAI). Residues 188 to 194 (TRQPTHL) lie on the Cytoplasmic side of the membrane. The chain crosses the membrane as a helical span at residues 195–215 (LPFFFIQVFDLIICLIHILGF). Residues 216–241 (MSSTSDIRLMIHTKTGPIYIKSTGLA) lie on the Extracellular side of the membrane. The chain crosses the membrane as a helical span at residues 242-262 (FIILSISCMMLAFKAYCLGMV). The Cytoplasmic segment spans residues 263-414 (WDCYKYLMLN…TSTPSNVHPC (152 aa)). The disordered stretch occupies residues 306–328 (LTGNLDSANESNTRAHPDPVTYD).

As to quaternary structure, interacts (via N-terminal extracellular domain) with human C2a. Post-translationally, phosphorylated on tyrosine residues.

The protein resides in the cell membrane. Functionally, cell surface receptor that binds to human complement C2a protein. This results in inhibition of the classical and lectin pathways of complement activation, probably due to interference with binding of C2a to C4b and interference with cleavage by C1 or MASP2 such that C3 convertase cannot be formed. This infers resistance to complement-mediated cell lysis, allowing parasite survival and infection. This is Tetraspanning orphan receptor from Schistosoma japonicum (Blood fluke).